A 406-amino-acid polypeptide reads, in one-letter code: UPF0754 membrane protein Cyan7425_4067 (406 aa).

Residues 381 to 401 (IVTLGGVLGLLIGIAQSVLLL) form a helical membrane-spanning segment.

The protein belongs to the UPF0754 family.

It is found in the cell inner membrane. This is UPF0754 membrane protein Cyan7425_4067 from Cyanothece sp. (strain PCC 7425 / ATCC 29141).